Consider the following 277-residue polypeptide: Thymidylate synthase (277 aa).

Residue Arg21 participates in dUMP binding. His51 contacts (6R)-5,10-methylene-5,6,7,8-tetrahydrofolate. 126–127 (RR) contributes to the dUMP binding site. The active-site Nucleophile is the Cys159. DUMP contacts are provided by residues 179 to 182 (RSSD), Asn190, and 220 to 222 (HAY). Asp182 contacts (6R)-5,10-methylene-5,6,7,8-tetrahydrofolate. Ala276 is a (6R)-5,10-methylene-5,6,7,8-tetrahydrofolate binding site.

Belongs to the thymidylate synthase family. Bacterial-type ThyA subfamily. In terms of assembly, homodimer.

Its subcellular location is the cytoplasm. It catalyses the reaction dUMP + (6R)-5,10-methylene-5,6,7,8-tetrahydrofolate = 7,8-dihydrofolate + dTMP. It functions in the pathway pyrimidine metabolism; dTTP biosynthesis. Its function is as follows. Catalyzes the reductive methylation of 2'-deoxyuridine-5'-monophosphate (dUMP) to 2'-deoxythymidine-5'-monophosphate (dTMP) while utilizing 5,10-methylenetetrahydrofolate (mTHF) as the methyl donor and reductant in the reaction, yielding dihydrofolate (DHF) as a by-product. This enzymatic reaction provides an intracellular de novo source of dTMP, an essential precursor for DNA biosynthesis. The polypeptide is Thymidylate synthase (Pseudomonas fluorescens (strain SBW25)).